We begin with the raw amino-acid sequence, 313 residues long: Protein YABBY 3 (313 aa).

The segment at 65-92 (CHYCDTVLVVSVPSSSLFETVTVRCGHC) adopts a C4-type zinc-finger fold. Disordered stretches follow at residues 107–149 (TTAA…SLLD) and 180–221 (NNSP…KRQR). The span at 112 to 128 (APPPPPPPPPPPPPPAA) shows a compositional bias: pro residues.

Belongs to the YABBY family. In terms of tissue distribution, expressed in shoot apex and young inflorescences.

The protein resides in the nucleus. This is Protein YABBY 3 (YAB3) from Oryza sativa subsp. japonica (Rice).